Here is a 467-residue protein sequence, read N- to C-terminus: tRNA dimethylallyltransferase (467 aa).

The transit peptide at Met-1–Leu-47 directs the protein to the mitochondrion. Thr-32–Ser-37 is a dimethylallyl diphosphate binding site. Interaction with substrate tRNA stretches follow at residues Asp-55–Gln-58 and Arg-183–Arg-187. The segment at Phe-221 to His-230 is core aggregation region. Positions Gln-233–Glu-255 are interaction with isopentenylpyrophosphate transferase. 2 interaction with substrate tRNA regions span residues Gln-281–Ile-283 and Ala-313–Asn-331. The segment at His-395–Lys-425 adopts a Matrin-type zinc-finger fold. The disordered stretch occupies residues Asp-432 to Val-467. A phosphoserine mark is found at Ser-443 and Ser-455.

The protein belongs to the IPP transferase family.

It is found in the mitochondrion. It localises to the cytoplasm. The protein resides in the nucleus. It carries out the reaction adenosine(37) in tRNA + dimethylallyl diphosphate = N(6)-dimethylallyladenosine(37) in tRNA + diphosphate. In terms of biological role, catalyzes the transfer of a dimethylallyl group onto the adenine at position 37 of both cytosolic and mitochondrial tRNAs, leading to the formation of N6-(dimethylallyl)adenosine (i6A37). Mediates modification of a limited subset of tRNAs: tRNA(Ser)(AGA), tRNA(Ser)(CGA), tRNA(Ser)(UGA), as well as partial modification of the selenocysteine tRNA(Ser)(UCA). TRIT1 is therefore required for selenoprotein expression. This is tRNA dimethylallyltransferase (Trit1) from Mus musculus (Mouse).